We begin with the raw amino-acid sequence, 680 residues long: DNA-directed RNA polymerase subunit beta' (680 aa).

Cys-69, Cys-71, Cys-87, and Cys-90 together coordinate Zn(2+). The Mg(2+) site is built by Asp-489, Asp-491, and Asp-493.

It belongs to the RNA polymerase beta' chain family. RpoC1 subfamily. In terms of assembly, in plastids the minimal PEP RNA polymerase catalytic core is composed of four subunits: alpha, beta, beta', and beta''. When a (nuclear-encoded) sigma factor is associated with the core the holoenzyme is formed, which can initiate transcription. It depends on Mg(2+) as a cofactor. Requires Zn(2+) as cofactor.

The protein localises to the plastid. It localises to the chloroplast. The catalysed reaction is RNA(n) + a ribonucleoside 5'-triphosphate = RNA(n+1) + diphosphate. DNA-dependent RNA polymerase catalyzes the transcription of DNA into RNA using the four ribonucleoside triphosphates as substrates. In Lobularia maritima (Sweet alyssum), this protein is DNA-directed RNA polymerase subunit beta'.